The chain runs to 724 residues: Catalase-peroxidase (724 aa).

Positions 1–26 are disordered; that stretch reads MDENKTKPTGKCPVMHGGNTSTGSSN. Positions 98-225 form a cross-link, tryptophyl-tyrosyl-methioninium (Trp-Tyr) (with M-251); it reads WHSAGSYRTT…LAAVQMGLIY (128 aa). H99 serves as the catalytic Proton acceptor. Positions 225–251 form a cross-link, tryptophyl-tyrosyl-methioninium (Tyr-Met) (with W-98); sequence YVNPEGVDGKSDPLRTAQDMRVTFSRM. Residue H266 participates in heme b binding.

This sequence belongs to the peroxidase family. Peroxidase/catalase subfamily. As to quaternary structure, homodimer or homotetramer. Heme b is required as a cofactor. Formation of the three residue Trp-Tyr-Met cross-link is important for the catalase, but not the peroxidase activity of the enzyme.

The enzyme catalyses H2O2 + AH2 = A + 2 H2O. It carries out the reaction 2 H2O2 = O2 + 2 H2O. Bifunctional enzyme with both catalase and broad-spectrum peroxidase activity. This Pectobacterium atrosepticum (strain SCRI 1043 / ATCC BAA-672) (Erwinia carotovora subsp. atroseptica) protein is Catalase-peroxidase.